Reading from the N-terminus, the 181-residue chain is Probable RNA 2'-phosphotransferase (181 aa).

Belongs to the KptA/TPT1 family.

Removes the 2'-phosphate from RNA via an intermediate in which the phosphate is ADP-ribosylated by NAD followed by a presumed transesterification to release the RNA and generate ADP-ribose 1''-2''-cyclic phosphate (APPR&gt;P). May function as an ADP-ribosylase. The protein is Probable RNA 2'-phosphotransferase of Acaryochloris marina (strain MBIC 11017).